A 371-amino-acid polypeptide reads, in one-letter code: Anhydro-N-acetylmuramic acid kinase (371 aa).

Residue glycine 15 to aspartate 22 participates in ATP binding.

Belongs to the anhydro-N-acetylmuramic acid kinase family.

It catalyses the reaction 1,6-anhydro-N-acetyl-beta-muramate + ATP + H2O = N-acetyl-D-muramate 6-phosphate + ADP + H(+). Its pathway is amino-sugar metabolism; 1,6-anhydro-N-acetylmuramate degradation. It functions in the pathway cell wall biogenesis; peptidoglycan recycling. Functionally, catalyzes the specific phosphorylation of 1,6-anhydro-N-acetylmuramic acid (anhMurNAc) with the simultaneous cleavage of the 1,6-anhydro ring, generating MurNAc-6-P. Is required for the utilization of anhMurNAc either imported from the medium or derived from its own cell wall murein, and thus plays a role in cell wall recycling. The protein is Anhydro-N-acetylmuramic acid kinase of Cereibacter sphaeroides (strain ATCC 17023 / DSM 158 / JCM 6121 / CCUG 31486 / LMG 2827 / NBRC 12203 / NCIMB 8253 / ATH 2.4.1.) (Rhodobacter sphaeroides).